The following is a 372-amino-acid chain: tRNA-specific 2-thiouridylase MnmA (372 aa).

Residues 9-16 (GMSGGVDS) and M35 each bind ATP. Positions 95 to 97 (NPD) are interaction with target base in tRNA. C100 functions as the Nucleophile in the catalytic mechanism. A disulfide bridge connects residues C100 and C201. G124 is a binding site for ATP. Positions 151-153 (KDQ) are interaction with tRNA. Residue C201 is the Cysteine persulfide intermediate of the active site. Residues 317–318 (RY) are interaction with tRNA.

This sequence belongs to the MnmA/TRMU family.

It localises to the cytoplasm. The catalysed reaction is S-sulfanyl-L-cysteinyl-[protein] + uridine(34) in tRNA + AH2 + ATP = 2-thiouridine(34) in tRNA + L-cysteinyl-[protein] + A + AMP + diphosphate + H(+). Its function is as follows. Catalyzes the 2-thiolation of uridine at the wobble position (U34) of tRNA, leading to the formation of s(2)U34. This is tRNA-specific 2-thiouridylase MnmA from Herminiimonas arsenicoxydans.